Here is a 301-residue protein sequence, read N- to C-terminus: Sulfate adenylyltransferase subunit 2 (301 aa).

Residues 279-301 (RQGRLIDRDEAGSMEKKKREGYF) are disordered.

Belongs to the PAPS reductase family. CysD subfamily. As to quaternary structure, heterodimer composed of CysD, the smaller subunit, and CysN.

The catalysed reaction is sulfate + ATP + H(+) = adenosine 5'-phosphosulfate + diphosphate. The protein operates within sulfur metabolism; hydrogen sulfide biosynthesis; sulfite from sulfate: step 1/3. In terms of biological role, with CysN forms the ATP sulfurylase (ATPS) that catalyzes the adenylation of sulfate producing adenosine 5'-phosphosulfate (APS) and diphosphate, the first enzymatic step in sulfur assimilation pathway. APS synthesis involves the formation of a high-energy phosphoric-sulfuric acid anhydride bond driven by GTP hydrolysis by CysN coupled to ATP hydrolysis by CysD. The polypeptide is Sulfate adenylyltransferase subunit 2 (Mesorhizobium japonicum (strain LMG 29417 / CECT 9101 / MAFF 303099) (Mesorhizobium loti (strain MAFF 303099))).